Reading from the N-terminus, the 804-residue chain is Endoplasmin (804 aa).

The signal sequence occupies residues 1-21; it reads MRVLWVLGLCCVLLTFGFVRA. The short motif at 42 to 44 is the SRT pseudosubstrate motif element; that stretch reads SRT. Asn-62 is a glycosylation site (N-linked (GlcNAc...) asparagine). Ser-64 carries the post-translational modification Phosphoserine. The N-linked (GlcNAc...) asparagine glycan is linked to Asn-107. Residues Asn-107, Asp-149, and Asn-162 each contribute to the ATP site. At Lys-168 the chain carries N6-(2-hydroxyisobutyryl)lysine. Residue Ser-172 is modified to Phosphoserine. Phe-199 is a binding site for ATP. Asn-217 carries N-linked (GlcNAc...) asparagine glycosylation. Residues 288 to 323 form a disordered region; the sequence is TVEEPLEEDETAQEEKEEADDEAAVEEEEEEKKPKT. The segment covering 289–317 has biased composition (acidic residues); it reads VEEPLEEDETAQEEKEEADDEAAVEEEEE. Position 403 is a phosphoserine (Ser-403). Lys-404 carries the N6-succinyllysine modification. N-linked (GlcNAc...) asparagine glycosylation is present at Asn-445. Residue Ser-447 is modified to Phosphoserine. An N6-acetyllysine modification is found at Lys-479. 2 N-linked (GlcNAc...) asparagine glycosylation sites follow: Asn-481 and Asn-502. N6-succinyllysine is present on Lys-633. Residues 749-804 form a disordered region; sequence IDPEAQVEEEPEEEPEDTTEDTTDDSEQDEEETDAGAEEEEEEQETEKEPTEKDEL. Residues 753-794 are compositionally biased toward acidic residues; it reads AQVEEEPEEEPEDTTEDTTDDSEQDEEETDAGAEEEEEEQET. Over residues 795 to 804 the composition is skewed to basic and acidic residues; that stretch reads EKEPTEKDEL. The short motif at 801–804 is the Prevents secretion from ER element; it reads KDEL.

This sequence belongs to the heat shock protein 90 family. As to quaternary structure, homodimer; disulfide-linked. Component of an EIF2 complex at least composed of CELF1/CUGBP1, CALR, CALR3, EIF2S1, EIF2S2, HSP90B1 and HSPA5. Part of a large chaperone multiprotein complex comprising DNAJB11, HSP90B1, HSPA5, HYOU, PDIA2, PDIA4, PDIA6, PPIB, SDF2L1, UGGT1 and very small amounts of ERP29, but not, or at very low levels, CALR nor CANX. Interacts with AIMP1; regulates its retention in the endoplasmic reticulum. Hyperglycosylated form interacts with OS9; promoting its degradation by the endoplasmic reticulum associated degradation (ERAD). Interacts with CNPY3. This interaction is disrupted in the presence of ATP. Interacts with TLR4 and TLR9, but not with TLR3. Interacts with MZB1 in a calcium-dependent manner. Interacts with METTL23. Interacts with IL1B; the interaction facilitates cargo translocation into the ERGIC. Interacts with EIF2AK3. In terms of processing, phosphorylated by CK2. Post-translationally, N-glycosylated cotranslationally at Asn-217 by STT3A-containing OST-A complex: this glycosylation is constitutive. In response to various stress, 5 additional facultative sites (Asn-62, Asn-107, Asn-445, Asn-481 and Asn-502) can be glycosylated post-translationally by STT3B-containing OST-B complex, leading to a hyperglycosylated form that is degraded by the ER-associated degradation (ERAD) pathway. In normal conditions, the OST-A complex together with CCDC134 prevent glycosylation at facultative sites during protein folding, thereby preventing hyperglycosylation. Mechanistically, nascent HSP90B1 is tethered during translation to a specialized CCDC134-containing translocon that forms a microenvironment for its folding, in which STT3A associates with the SRT pseudosubstrate motif, and prevents access to facultative glycosylation sites until folding is completed, rendering its facultative sites inaccessible to the OST-B complex.

Its subcellular location is the endoplasmic reticulum lumen. It is found in the sarcoplasmic reticulum lumen. The protein resides in the melanosome. The catalysed reaction is ATP + H2O = ADP + phosphate + H(+). Its function is as follows. ATP-dependent chaperone involved in the processing of proteins in the endoplasmic reticulum, regulating their transport. Together with MESD, acts as a modulator of the Wnt pathway by promoting the folding of LRP6, a coreceptor of the canonical Wnt pathway. When associated with CNPY3, required for proper folding of Toll-like receptors. Promotes folding and trafficking of TLR4 to the cell surface. May participate in the unfolding of cytosolic leaderless cargos (lacking the secretion signal sequence) such as the interleukin 1/IL-1 to facilitate their translocation into the ERGIC (endoplasmic reticulum-Golgi intermediate compartment) and secretion; the translocation process is mediated by the cargo receptor TMED10. This chain is Endoplasmin, found in Rattus norvegicus (Rat).